The sequence spans 89 residues: MALTTEQKSAILAEYGLHEKDTGSPEAQIALLSKRIADITEHLKKHKHDHHTRHGLMALIGRRKRLSKYLADKDIERYRALIERLGLRR.

The protein belongs to the universal ribosomal protein uS15 family. Part of the 30S ribosomal subunit. Forms a bridge to the 50S subunit in the 70S ribosome, contacting the 23S rRNA.

Functionally, one of the primary rRNA binding proteins, it binds directly to 16S rRNA where it helps nucleate assembly of the platform of the 30S subunit by binding and bridging several RNA helices of the 16S rRNA. Forms an intersubunit bridge (bridge B4) with the 23S rRNA of the 50S subunit in the ribosome. This Nocardia farcinica (strain IFM 10152) protein is Small ribosomal subunit protein uS15.